The primary structure comprises 360 residues: Protein AIR1 (360 aa).

Residue Ser37 is modified to Phosphoserine. 4 consecutive CCHC-type zinc fingers follow at residues 74 to 91 (PKCN…NCPH), 112 to 129 (IICT…QCPH), 134 to 151 (VFCT…RCPS), and 173 to 190 (VFCY…DCAE). Residues 265–360 (KWKGKVQSTR…SNKSQRNGRY (96 aa)) form a disordered region. Over residues 274-286 (RNKNSSNNRYESS) the composition is skewed to low complexity. Over residues 317–333 (RSSQNNRTNDYSSQFSY) the composition is skewed to polar residues. The span at 349–360 (SSSNKSQRNGRY) shows a compositional bias: low complexity.

Belongs to the AIR1 family. In terms of assembly, component of the TRAMP complex (also called TRF4 complex) composed of at least HUL4, MTR4, PAP2/TFR4 and either AIR1 or AIR2. Component of the TRAMP5 complex composed of at least AIR1, MTR4 and TRF5. Interacts with HMT1 and NPL3. The interaction with NPL3 requires the presence of HMT1.

It localises to the cytoplasm. The protein resides in the nucleus. Functionally, component of the TRAMP (TRF4) and TRAMP5 complexes which have a poly(A) RNA polymerase activity and are involved in a post-transcriptional quality control mechanism limiting inappropriate expression of genetic information. Polyadenylation is required for the degradative activity of the exosome on several of its nuclear RNA substrates like cryptic transcripts generated by RNA polymerase II and III, or hypomethylated pre-tRNAi-Met. Both complexes polyadenylate RNA processing and degradation intermediates of snRNAs, snoRNAs and mRNAs that accumulate in strains lacking a functional exosome. AIR1 also inhibits the methylation of NPL3 mediated by HMT1 through its interaction with HMT1. This chain is Protein AIR1 (AIR1), found in Saccharomyces cerevisiae (strain ATCC 204508 / S288c) (Baker's yeast).